Here is a 393-residue protein sequence, read N- to C-terminus: Formate-dependent phosphoribosylglycinamide formyltransferase (393 aa).

Residues 22-23 (EL) and Glu82 each bind N(1)-(5-phospho-beta-D-ribosyl)glycinamide. ATP is bound by residues Arg114, Lys155, 160-165 (SSGKGQ), 195-198 (EGFI), and Glu203. The ATP-grasp domain maps to 119–308 (RLAAEELKLP…QFALHARAIL (190 aa)). Mg(2+) contacts are provided by Glu267 and Glu279. Residues Asp286, Lys356, and 363–364 (RR) contribute to the N(1)-(5-phospho-beta-D-ribosyl)glycinamide site.

This sequence belongs to the PurK/PurT family. In terms of assembly, homodimer.

It catalyses the reaction N(1)-(5-phospho-beta-D-ribosyl)glycinamide + formate + ATP = N(2)-formyl-N(1)-(5-phospho-beta-D-ribosyl)glycinamide + ADP + phosphate + H(+). It functions in the pathway purine metabolism; IMP biosynthesis via de novo pathway; N(2)-formyl-N(1)-(5-phospho-D-ribosyl)glycinamide from N(1)-(5-phospho-D-ribosyl)glycinamide (formate route): step 1/1. Involved in the de novo purine biosynthesis. Catalyzes the transfer of formate to 5-phospho-ribosyl-glycinamide (GAR), producing 5-phospho-ribosyl-N-formylglycinamide (FGAR). Formate is provided by PurU via hydrolysis of 10-formyl-tetrahydrofolate. The sequence is that of Formate-dependent phosphoribosylglycinamide formyltransferase from Pseudomonas syringae pv. tomato (strain ATCC BAA-871 / DC3000).